The sequence spans 103 residues: MFVKKGDKVKVITGKDKNKEGVVLAAFPKQDKVIVEGVNVVKKHQKPNQAAPQGGILEVEAPIHVSNVMVIDPSNGEATKVAFKEVDGKKVRVSKKTGEVLDK.

Belongs to the universal ribosomal protein uL24 family. Part of the 50S ribosomal subunit.

Its function is as follows. One of two assembly initiator proteins, it binds directly to the 5'-end of the 23S rRNA, where it nucleates assembly of the 50S subunit. One of the proteins that surrounds the polypeptide exit tunnel on the outside of the subunit. This Enterococcus faecalis (strain ATCC 700802 / V583) protein is Large ribosomal subunit protein uL24.